The sequence spans 1058 residues: Carbamoyl phosphate synthase large chain (1058 aa).

Residues 1-401 (MPKRTDIQKI…SLLKACRSLE (401 aa)) are carboxyphosphate synthetic domain. 12 residues coordinate ATP: R129, R169, G175, G176, R208, I210, E215, G241, I242, H243, Q284, and E298. An ATP-grasp 1 domain is found at 133–327 (KQLMEELEQP…IAKLAAKIAV (195 aa)). 3 residues coordinate Mg(2+): Q284, E298, and N300. Mn(2+)-binding residues include Q284, E298, and N300. The interval 402–546 (IGVHHNEIPE…YSTYGWENES (145 aa)) is oligomerization domain. The tract at residues 547-929 (IRSDKESVLV…ALYKAFEASY (383 aa)) is carbamoyl phosphate synthetic domain. Residues 671–861 (EQALKELDIP…MAQVATKLIL (191 aa)) enclose the ATP-grasp 2 domain. ATP contacts are provided by R707, S746, I748, E752, G777, V778, H779, S780, Q820, and E832. Mg(2+)-binding residues include Q820, E832, and N834. 3 residues coordinate Mn(2+): Q820, E832, and N834. In terms of domain architecture, MGS-like spans 930–1058 (LHLPTFGNVV…ESRSFVTEAI (129 aa)). Residues 930-1058 (LHLPTFGNVV…ESRSFVTEAI (129 aa)) form an allosteric domain region.

Belongs to the CarB family. In terms of assembly, composed of two chains; the small (or glutamine) chain promotes the hydrolysis of glutamine to ammonia, which is used by the large (or ammonia) chain to synthesize carbamoyl phosphate. Tetramer of heterodimers (alpha,beta)4. Mg(2+) serves as cofactor. The cofactor is Mn(2+).

It carries out the reaction hydrogencarbonate + L-glutamine + 2 ATP + H2O = carbamoyl phosphate + L-glutamate + 2 ADP + phosphate + 2 H(+). The catalysed reaction is hydrogencarbonate + NH4(+) + 2 ATP = carbamoyl phosphate + 2 ADP + phosphate + 2 H(+). It participates in amino-acid biosynthesis; L-arginine biosynthesis; carbamoyl phosphate from bicarbonate: step 1/1. The protein operates within pyrimidine metabolism; UMP biosynthesis via de novo pathway; (S)-dihydroorotate from bicarbonate: step 1/3. Its function is as follows. Large subunit of the glutamine-dependent carbamoyl phosphate synthetase (CPSase). CPSase catalyzes the formation of carbamoyl phosphate from the ammonia moiety of glutamine, carbonate, and phosphate donated by ATP, constituting the first step of 2 biosynthetic pathways, one leading to arginine and/or urea and the other to pyrimidine nucleotides. The large subunit (synthetase) binds the substrates ammonia (free or transferred from glutamine from the small subunit), hydrogencarbonate and ATP and carries out an ATP-coupled ligase reaction, activating hydrogencarbonate by forming carboxy phosphate which reacts with ammonia to form carbamoyl phosphate. In Streptococcus pneumoniae (strain Hungary19A-6), this protein is Carbamoyl phosphate synthase large chain.